Reading from the N-terminus, the 149-residue chain is Large ribosomal subunit protein bL9 (149 aa).

Belongs to the bacterial ribosomal protein bL9 family. Part of the 50S ribosomal subunit. In stalled/collided disomes (pairs of ribosomes where the leading ribosome is stalled and a second ribosome has collided with it), bL9 in the collided ribosome contacts bS6 and uL2, while it contacts only helices of the 16S rRNA in the stalled ribosome; the inter-ribosome bridge thus formed is different from that formed between normally translating ribosomes.

Its function is as follows. Binds to the 23S rRNA. This Bacillus subtilis (strain 168) protein is Large ribosomal subunit protein bL9.